Here is a 374-residue protein sequence, read N- to C-terminus: DNA replication and repair protein RecF (374 aa).

34 to 41 (GDNGAGKT) contributes to the ATP binding site.

This sequence belongs to the RecF family.

It localises to the cytoplasm. Its function is as follows. The RecF protein is involved in DNA metabolism; it is required for DNA replication and normal SOS inducibility. RecF binds preferentially to single-stranded, linear DNA. It also seems to bind ATP. The protein is DNA replication and repair protein RecF of Rhizobium johnstonii (strain DSM 114642 / LMG 32736 / 3841) (Rhizobium leguminosarum bv. viciae).